The sequence spans 338 residues: Glyceraldehyde-3-phosphate dehydrogenase 2 (338 aa).

NAD(+)-binding positions include 13-14 (TI) and Gly-111. Position 140-142 (140-142 (SCN)) interacts with D-glyceraldehyde 3-phosphate. Cys-141 functions as the Nucleophile in the catalytic mechanism. Residue Arg-169 participates in NAD(+) binding. 195–196 (HG) contributes to the D-glyceraldehyde 3-phosphate binding site. Residue Gln-300 participates in NAD(+) binding.

It belongs to the glyceraldehyde-3-phosphate dehydrogenase family. Homotetramer.

The protein localises to the cytoplasm. The enzyme catalyses D-glyceraldehyde 3-phosphate + phosphate + NADP(+) = (2R)-3-phospho-glyceroyl phosphate + NADPH + H(+). It catalyses the reaction D-glyceraldehyde 3-phosphate + phosphate + NAD(+) = (2R)-3-phospho-glyceroyl phosphate + NADH + H(+). Its pathway is carbohydrate degradation; glycolysis; pyruvate from D-glyceraldehyde 3-phosphate: step 1/5. This chain is Glyceraldehyde-3-phosphate dehydrogenase 2, found in Methanosarcina barkeri (strain Fusaro / DSM 804).